Here is a 454-residue protein sequence, read N- to C-terminus: O-phospho-L-seryl-tRNA:Cys-tRNA synthase 2 (454 aa).

Pyridoxal 5'-phosphate contacts are provided by residues 146–147 (AR), Asn-251, and 274–276 (SGH). Residue Lys-277 is modified to N6-(pyridoxal phosphate)lysine.

Belongs to the SepCysS family. Homodimer. Interacts with SepRS. Pyridoxal 5'-phosphate is required as a cofactor.

The catalysed reaction is O-phospho-L-seryl-tRNA(Cys) + hydrogen sulfide + H(+) = L-cysteinyl-tRNA(Cys) + phosphate. In terms of biological role, converts O-phospho-L-seryl-tRNA(Cys) (Sep-tRNA(Cys)) to L-cysteinyl-tRNA(Cys) (Cys-tRNA(Cys)). The sequence is that of O-phospho-L-seryl-tRNA:Cys-tRNA synthase 2 from Methanoregula boonei (strain DSM 21154 / JCM 14090 / 6A8).